The following is a 592-amino-acid chain: Bifunctional dolabella-3,7-dien-18-ol synthase/dolathalia-3,7,11-triene synthase TPS20, chloroplastic (592 aa).

The transit peptide at Met-1 to Asn-52 directs the protein to the chloroplast. Residues Asp-349, Asp-353, Asp-491, Thr-495, and Glu-499 each coordinate Mg(2+). Positions Asp-349 to Asp-353 match the DDXXD motif motif.

This sequence belongs to the terpene synthase family. Tpsa subfamily. It depends on Mg(2+) as a cofactor. Mn(2+) serves as cofactor.

It localises to the plastid. It is found in the chloroplast. The catalysed reaction is (2E,6E,10E)-geranylgeranyl diphosphate + H2O = (3E,7E)-dolabella-3,7-dien-18-ol + diphosphate. It carries out the reaction (2E,6E,10E)-geranylgeranyl diphosphate = (3E,7E)-dolathalia-3,7,11-triene + diphosphate. It participates in secondary metabolite biosynthesis; terpenoid biosynthesis. Functionally, involved in the biosynthesis of diterpenes in roots. Possesses dolabella-3,7-dien-18-ol synthase activity and dolathalia-3,7,11-triene synthase activity in vitro. Catalyzes the formation of dolabella-3,7-dien-18-ol and dolathalia-3,7,11-triene from geranygeranyl diphosphate (GGPP). Does not seem to be involved in sesquiterpene biosynthesis. The polypeptide is Bifunctional dolabella-3,7-dien-18-ol synthase/dolathalia-3,7,11-triene synthase TPS20, chloroplastic (Arabidopsis thaliana (Mouse-ear cress)).